The following is a 219-amino-acid chain: Tritrans,polycis-undecaprenyl-diphosphate synthase (geranylgeranyl-diphosphate specific) (219 aa).

The active site involves aspartate 12. Aspartate 12 is a Mg(2+) binding site. Residues 13–16 (GNRR), tryptophan 17, and 59–61 (SRD) contribute to the substrate site. Asparagine 62 acts as the Proton acceptor in catalysis. Residues arginine 66, arginine 168, and 174 to 176 (RLS) each bind substrate. Glutamate 187 is a Mg(2+) binding site.

This sequence belongs to the UPP synthase family. Homodimer. Requires Mg(2+) as cofactor.

It carries out the reaction geranylgeranyl diphosphate + 7 isopentenyl diphosphate = tri-trans,hepta-cis-undecaprenyl diphosphate + 7 diphosphate. Its function is as follows. Catalyzes the sequential condensation of isopentenyl diphosphate (IPP) with geranylgeranyl diphosphate (GGPP) to yield (2Z,6Z,10Z,14Z,18Z,22Z,26Z,30E,34E,38E)-undecaprenyl diphosphate (tritrans,heptacis-UPP). It is probably the precursor of glycosyl carrier lipids. In Aeropyrum pernix (strain ATCC 700893 / DSM 11879 / JCM 9820 / NBRC 100138 / K1), this protein is Tritrans,polycis-undecaprenyl-diphosphate synthase (geranylgeranyl-diphosphate specific).